The chain runs to 324 residues: bZIP transcription factor 46 (324 aa).

The disordered stretch occupies residues 106-127 (LGGSDDEDPAAAAAAAAPAQRQ). Over residues 115 to 124 (AAAAAAAAPA) the composition is skewed to low complexity. The bZIP domain occupies 242–287 (VERRQRRMIKNRESAARSRARKQAYIMELEAEVAKLKEQKAELQKK). The tract at residues 244–263 (RRQRRMIKNRESAARSRARK) is basic motif. Residues 270–284 (LEAEVAKLKEQKAEL) form a leucine-zipper region.

As to quaternary structure, interacts with MODD. Interacts with SAPK2, SAPK6 and SAPK9. Phosphorylated on serine and threonine residues by SAPK2, SAPK6 and SAPK9. Phosphorylation is required for full transactivation activity. As to expression, expressed in roots, shoots, leaves, flag leaves, stems, flowers and panicles. Widely expressed.

The protein localises to the nucleus. Its function is as follows. Transcription factor involved in abscisic acid (ABA) signaling pathway. Transcription factor activity is fully activated by ABA. Acts as a positive regulator of the expression of abiotic stress-responsive genes through an ABA-dependent signaling pathway. Acts as a positive regulator of ABA signaling and drought stress tolerance. Plays an important role in ABA and auxin responses. Involved in ABA signaling and stress responses by directly binding to the ABA-responsive element (ABRE)-containing genes, especially WRKY family genes. Modulates response to auxin. Suppresses auxin signaling by targeting ABRE-containing genes related to auxin metabolism or signaling. The sequence is that of bZIP transcription factor 46 from Oryza sativa subsp. japonica (Rice).